The sequence spans 396 residues: S-adenosylmethionine synthase (396 aa).

Residue His16 coordinates ATP. A Mg(2+)-binding site is contributed by Asp18. Position 44 (Glu44) interacts with K(+). Glu57 and Gln100 together coordinate L-methionine. The flexible loop stretch occupies residues 100–110 (QSVDIAQGVDR). ATP is bound by residues 165 to 167 (DAK), Asp240, 246 to 247 (RK), Ala263, and Lys267. Asp240 provides a ligand contact to L-methionine. Residue Lys271 participates in L-methionine binding.

It belongs to the AdoMet synthase family. Homotetramer; dimer of dimers. Mg(2+) is required as a cofactor. It depends on K(+) as a cofactor.

Its subcellular location is the cytoplasm. It catalyses the reaction L-methionine + ATP + H2O = S-adenosyl-L-methionine + phosphate + diphosphate. It participates in amino-acid biosynthesis; S-adenosyl-L-methionine biosynthesis; S-adenosyl-L-methionine from L-methionine: step 1/1. Catalyzes the formation of S-adenosylmethionine (AdoMet) from methionine and ATP. The overall synthetic reaction is composed of two sequential steps, AdoMet formation and the subsequent tripolyphosphate hydrolysis which occurs prior to release of AdoMet from the enzyme. The polypeptide is S-adenosylmethionine synthase (Pseudomonas syringae pv. syringae (strain B728a)).